The sequence spans 658 residues: Methionine--tRNA ligase (658 aa).

The 'HIGH' region motif lies at 9 to 19; sequence PYANGKAHVGH. Cysteine 140, cysteine 143, cysteine 152, and cysteine 156 together coordinate Zn(2+). Residues 322-326 carry the 'KMSKS' region motif; the sequence is TFSKS. ATP is bound at residue lysine 325. The 101-residue stretch at 558–658 folds into the tRNA-binding domain; the sequence is DFQKLDIRIG…KEVEPGTRVC (101 aa).

This sequence belongs to the class-I aminoacyl-tRNA synthetase family. MetG type 1 subfamily. As to quaternary structure, homodimer. The cofactor is Zn(2+).

The protein resides in the cytoplasm. It carries out the reaction tRNA(Met) + L-methionine + ATP = L-methionyl-tRNA(Met) + AMP + diphosphate. In terms of biological role, is required not only for elongation of protein synthesis but also for the initiation of all mRNA translation through initiator tRNA(fMet) aminoacylation. In Archaeoglobus fulgidus (strain ATCC 49558 / DSM 4304 / JCM 9628 / NBRC 100126 / VC-16), this protein is Methionine--tRNA ligase.